The chain runs to 372 residues: UDP-N-acetylglucosamine--N-acetylmuramyl-(pentapeptide) pyrophosphoryl-undecaprenol N-acetylglucosamine transferase (372 aa).

UDP-N-acetyl-alpha-D-glucosamine-binding positions include 15 to 17 (TGG), N126, R169, S197, and Q299.

It belongs to the glycosyltransferase 28 family. MurG subfamily.

The protein localises to the cell inner membrane. The enzyme catalyses di-trans,octa-cis-undecaprenyl diphospho-N-acetyl-alpha-D-muramoyl-L-alanyl-D-glutamyl-meso-2,6-diaminopimeloyl-D-alanyl-D-alanine + UDP-N-acetyl-alpha-D-glucosamine = di-trans,octa-cis-undecaprenyl diphospho-[N-acetyl-alpha-D-glucosaminyl-(1-&gt;4)]-N-acetyl-alpha-D-muramoyl-L-alanyl-D-glutamyl-meso-2,6-diaminopimeloyl-D-alanyl-D-alanine + UDP + H(+). It participates in cell wall biogenesis; peptidoglycan biosynthesis. In terms of biological role, cell wall formation. Catalyzes the transfer of a GlcNAc subunit on undecaprenyl-pyrophosphoryl-MurNAc-pentapeptide (lipid intermediate I) to form undecaprenyl-pyrophosphoryl-MurNAc-(pentapeptide)GlcNAc (lipid intermediate II). The chain is UDP-N-acetylglucosamine--N-acetylmuramyl-(pentapeptide) pyrophosphoryl-undecaprenol N-acetylglucosamine transferase from Methylobacterium sp. (strain 4-46).